Reading from the N-terminus, the 395-residue chain is NAD(P)H-quinone oxidoreductase subunit H, chloroplastic (395 aa).

This sequence belongs to the complex I 49 kDa subunit family. As to quaternary structure, NDH is composed of at least 16 different subunits, 5 of which are encoded in the nucleus.

The protein resides in the plastid. It is found in the chloroplast thylakoid membrane. The enzyme catalyses a plastoquinone + NADH + (n+1) H(+)(in) = a plastoquinol + NAD(+) + n H(+)(out). The catalysed reaction is a plastoquinone + NADPH + (n+1) H(+)(in) = a plastoquinol + NADP(+) + n H(+)(out). Its function is as follows. NDH shuttles electrons from NAD(P)H:plastoquinone, via FMN and iron-sulfur (Fe-S) centers, to quinones in the photosynthetic chain and possibly in a chloroplast respiratory chain. The immediate electron acceptor for the enzyme in this species is believed to be plastoquinone. Couples the redox reaction to proton translocation, and thus conserves the redox energy in a proton gradient. The sequence is that of NAD(P)H-quinone oxidoreductase subunit H, chloroplastic from Chloranthus spicatus (Chulantree).